The sequence spans 359 residues: Isopentenyl-diphosphate delta-isomerase (359 aa).

12-13 (RK) is a binding site for substrate. Residues serine 68, 69-71 (AMT), serine 99, and asparagine 128 each bind FMN. 99–101 (SQR) is a substrate binding site. Position 162 (glutamine 162) interacts with substrate. Glutamate 163 serves as a coordination point for Mg(2+). FMN is bound by residues lysine 194, threonine 224, 277–279 (GIR), and 298–299 (AL).

Belongs to the IPP isomerase type 2 family. As to quaternary structure, homooctamer. Dimer of tetramers. FMN serves as cofactor. NADPH is required as a cofactor. Requires Mg(2+) as cofactor.

The protein resides in the cytoplasm. The enzyme catalyses isopentenyl diphosphate = dimethylallyl diphosphate. Functionally, involved in the biosynthesis of isoprenoids. Catalyzes the 1,3-allylic rearrangement of the homoallylic substrate isopentenyl (IPP) to its allylic isomer, dimethylallyl diphosphate (DMAPP). The protein is Isopentenyl-diphosphate delta-isomerase of Methanoregula boonei (strain DSM 21154 / JCM 14090 / 6A8).